A 352-amino-acid chain; its full sequence is Biotin synthase (352 aa).

The 228-residue stretch at 41 to 268 (NEVQVSTLLS…ASHVRLSAGR (228 aa)) folds into the Radical SAM core domain. [4Fe-4S] cluster contacts are provided by cysteine 56, cysteine 60, and cysteine 63. 4 residues coordinate [2Fe-2S] cluster: cysteine 100, cysteine 131, cysteine 191, and arginine 263.

It belongs to the radical SAM superfamily. Biotin synthase family. Homodimer. [4Fe-4S] cluster is required as a cofactor. Requires [2Fe-2S] cluster as cofactor.

The catalysed reaction is (4R,5S)-dethiobiotin + (sulfur carrier)-SH + 2 reduced [2Fe-2S]-[ferredoxin] + 2 S-adenosyl-L-methionine = (sulfur carrier)-H + biotin + 2 5'-deoxyadenosine + 2 L-methionine + 2 oxidized [2Fe-2S]-[ferredoxin]. Its pathway is cofactor biosynthesis; biotin biosynthesis; biotin from 7,8-diaminononanoate: step 2/2. In terms of biological role, catalyzes the conversion of dethiobiotin (DTB) to biotin by the insertion of a sulfur atom into dethiobiotin via a radical-based mechanism. This is Biotin synthase from Marinobacter nauticus (strain ATCC 700491 / DSM 11845 / VT8) (Marinobacter aquaeolei).